The chain runs to 167 residues: Translation initiation factor IF-3 (167 aa).

The protein belongs to the IF-3 family. As to quaternary structure, monomer.

It localises to the cytoplasm. Its function is as follows. IF-3 binds to the 30S ribosomal subunit and shifts the equilibrium between 70S ribosomes and their 50S and 30S subunits in favor of the free subunits, thus enhancing the availability of 30S subunits on which protein synthesis initiation begins. This is Translation initiation factor IF-3 from Bacillus anthracis.